A 568-amino-acid chain; its full sequence is Urease subunit beta (568 aa).

Positions 131 to 568 (GGIDTHIHFI…LSLAQLYNLF (438 aa)) constitute a Urease domain. Histidine 136, histidine 138, and lysine 219 together coordinate Ni(2+). Lysine 219 is subject to N6-carboxylysine. Substrate is bound at residue histidine 221. The Ni(2+) site is built by histidine 248 and histidine 274. The Proton donor role is filled by histidine 321. Aspartate 361 is a Ni(2+) binding site.

The protein belongs to the metallo-dependent hydrolases superfamily. Urease alpha subunit family. In terms of assembly, heterohexamer of 3 UreA (alpha) and 3 UreB (beta) subunits. The cofactor is Ni cation. In terms of processing, carboxylation allows a single lysine to coordinate two nickel ions.

The protein resides in the cytoplasm. It carries out the reaction urea + 2 H2O + H(+) = hydrogencarbonate + 2 NH4(+). It participates in nitrogen metabolism; urea degradation; CO(2) and NH(3) from urea (urease route): step 1/1. This is Urease subunit beta from Helicobacter heilmannii.